The sequence spans 127 residues: Protein ApaG (127 aa).

In terms of domain architecture, ApaG spans 3-127 (KTSIPDFQIT…FYLIAPLALH (125 aa)).

This is Protein ApaG from Bdellovibrio bacteriovorus (strain ATCC 15356 / DSM 50701 / NCIMB 9529 / HD100).